A 169-amino-acid polypeptide reads, in one-letter code: Putative ribonuclease VapC50 (169 aa).

Its function is as follows. Toxic component of a type II toxin-antitoxin (TA) system. An RNase. The cognate antitoxin is VapB50. In Mycobacterium tuberculosis (strain ATCC 25618 / H37Rv), this protein is Putative ribonuclease VapC50.